The chain runs to 242 residues: ATP-dependent dethiobiotin synthetase BioD 1 (242 aa).

12–17 contacts ATP; it reads NVGKTT. Thr16 is a binding site for Mg(2+). The active site involves Lys37. An ATP-binding site is contributed by Asp66. Positions 66 and 124 each coordinate Mg(2+). ATP is bound by residues 184-185, 213-215, and Glu220; these read NR and PYL.

Belongs to the dethiobiotin synthetase family. As to quaternary structure, homodimer. Requires Mg(2+) as cofactor.

The protein resides in the cytoplasm. The enzyme catalyses (7R,8S)-7,8-diammoniononanoate + CO2 + ATP = (4R,5S)-dethiobiotin + ADP + phosphate + 3 H(+). It participates in cofactor biosynthesis; biotin biosynthesis; biotin from 7,8-diaminononanoate: step 1/2. Catalyzes a mechanistically unusual reaction, the ATP-dependent insertion of CO2 between the N7 and N8 nitrogen atoms of 7,8-diaminopelargonic acid (DAPA, also called 7,8-diammoniononanoate) to form a ureido ring. This chain is ATP-dependent dethiobiotin synthetase BioD 1, found in Haemophilus influenzae (strain ATCC 51907 / DSM 11121 / KW20 / Rd).